The chain runs to 191 residues: Protein Ves (191 aa).

The protein belongs to the Ves family.

The protein is Protein Ves of Escherichia coli O139:H28 (strain E24377A / ETEC).